A 30-amino-acid chain; its full sequence is uncharacterized protein (30 aa).

A helical transmembrane segment spans residues 9–26 (YRLVIIVLISVYYRYRFF).

It is found in the plastid. Its subcellular location is the chloroplast membrane. This is an uncharacterized protein from Marchantia polymorpha (Common liverwort).